Here is a 393-residue protein sequence, read N- to C-terminus: Ig gamma-1 chain C region, membrane-bound form (393 aa).

Positions 1-97 are CH1; sequence AKTTPPSVYP…ASSTKVDKKI (97 aa). A disulfide bridge connects residues Cys27 and Cys82. The hinge stretch occupies residues 98-110; that stretch reads VPRDCGCKPCICT. Residues 111-217 form a CH2 region; it reads VPEVSSVFIF…PIEKTISKTK (107 aa). Disulfide bonds link Cys138-Cys198 and Cys244-Cys302. The N-linked (GlcNAc...) asparagine glycan is linked to Asn174. Positions 218 to 324 are CH3; the sequence is GRPKAPQVYT…EKSLSHSPGL (107 aa). Residues 340 to 357 form a helical membrane-spanning segment; that stretch reads GLWTTITIFISLFLLSVC. Residues 358 to 393 lie on the Cytoplasmic side of the membrane; sequence YSAAVTLFKVKWIFSSVVELKQTLVPEYKNMIGQAP.

The protein localises to the cell membrane. This is Ig gamma-1 chain C region, membrane-bound form (Ighg1) from Mus musculus (Mouse).